The sequence spans 552 residues: Cycloheximide resistance protein (552 aa).

The tract at residues 46–70 is disordered; the sequence is VLNSSDKSQSSENKEQTEGDQATIQ. Over residues 47 to 56 the composition is skewed to polar residues; sequence LNSSDKSQSS. The next 12 membrane-spanning stretches (helical) occupy residues 100–120, 137–157, 168–188, 194–213, 225–246, 262–282, 346–362, 381–399, 419–439, 445–464, 477–494, and 518–539; these read AIAA…SAIY, LATL…LFWS, TPLY…TALS, LSVL…STGG, YSIA…GPLI, WSFW…SFSL, IYIA…FESV, YVST…LPTV, LPPA…FGWT, NWFV…FIIF, VEYL…RSVS, and WGSS…FFYL.

This sequence belongs to the major facilitator superfamily. CAR1 family.

The protein localises to the membrane. Functionally, probable transporter. Confers resistance to cycloheximide. The chain is Cycloheximide resistance protein (CYHR) from Candida maltosa (Yeast).